We begin with the raw amino-acid sequence, 210 residues long: Protein-L-isoaspartate O-methyltransferase (210 aa).

S54 is an active-site residue.

The protein belongs to the methyltransferase superfamily. L-isoaspartyl/D-aspartyl protein methyltransferase family.

It is found in the cytoplasm. The catalysed reaction is [protein]-L-isoaspartate + S-adenosyl-L-methionine = [protein]-L-isoaspartate alpha-methyl ester + S-adenosyl-L-homocysteine. Functionally, catalyzes the methyl esterification of L-isoaspartyl residues in peptides and proteins that result from spontaneous decomposition of normal L-aspartyl and L-asparaginyl residues. It plays a role in the repair and/or degradation of damaged proteins. The sequence is that of Protein-L-isoaspartate O-methyltransferase from Methanothrix thermoacetophila (strain DSM 6194 / JCM 14653 / NBRC 101360 / PT) (Methanosaeta thermophila).